The following is a 212-amino-acid chain: Pyrrolidone-carboxylate peptidase (212 aa).

Catalysis depends on residues Glu80, Cys143, and His165.

It belongs to the peptidase C15 family. As to quaternary structure, homotetramer.

The protein localises to the cytoplasm. The enzyme catalyses Release of an N-terminal pyroglutamyl group from a polypeptide, the second amino acid generally not being Pro.. Removes 5-oxoproline from various penultimate amino acid residues except L-proline. This is Pyrrolidone-carboxylate peptidase from Vibrio parahaemolyticus serotype O3:K6 (strain RIMD 2210633).